A 467-amino-acid polypeptide reads, in one-letter code: Probable citrate synthase 2, mitochondrial (467 aa).

Active-site residues include histidine 303, histidine 349, and aspartate 404.

It belongs to the citrate synthase family. As to quaternary structure, homodimer.

It is found in the mitochondrion matrix. It catalyses the reaction oxaloacetate + acetyl-CoA + H2O = citrate + CoA + H(+). Its pathway is carbohydrate metabolism; tricarboxylic acid cycle; isocitrate from oxaloacetate: step 1/2. The sequence is that of Probable citrate synthase 2, mitochondrial from Aedes aegypti (Yellowfever mosquito).